The sequence spans 344 residues: 3,4-dihydroxy-2-butanone 4-phosphate synthase (344 aa).

The DHBP synthase stretch occupies residues 1–202; it reads MILRRVTEAL…VSDLISYRLE (202 aa). D-ribulose 5-phosphate contacts are provided by residues 27–28, aspartate 32, 139–143, and glutamate 163; these read RE and RTGHT. Glutamate 28 is a binding site for Mg(2+). Histidine 142 lines the Mg(2+) pocket. The segment at 203–344 is GTP cyclohydrolase II-like; it reads NESLLKMFCQ…GLKLVETISL (142 aa).

In the N-terminal section; belongs to the DHBP synthase family. The protein in the C-terminal section; belongs to the GTP cyclohydrolase II family. The cofactor is Mg(2+). Mn(2+) serves as cofactor.

It catalyses the reaction D-ribulose 5-phosphate = (2S)-2-hydroxy-3-oxobutyl phosphate + formate + H(+). Its pathway is cofactor biosynthesis; riboflavin biosynthesis; 2-hydroxy-3-oxobutyl phosphate from D-ribulose 5-phosphate: step 1/1. Functionally, catalyzes the conversion of D-ribulose 5-phosphate to formate and 3,4-dihydroxy-2-butanone 4-phosphate. The sequence is that of 3,4-dihydroxy-2-butanone 4-phosphate synthase (ribB) from Helicobacter pylori (strain J99 / ATCC 700824) (Campylobacter pylori J99).